The sequence spans 153 residues: Arginine repressor (153 aa).

It belongs to the ArgR family.

The protein localises to the cytoplasm. The protein operates within amino-acid biosynthesis; L-arginine biosynthesis [regulation]. In terms of biological role, regulates arginine biosynthesis genes. The sequence is that of Arginine repressor from Acetivibrio thermocellus (strain ATCC 27405 / DSM 1237 / JCM 9322 / NBRC 103400 / NCIMB 10682 / NRRL B-4536 / VPI 7372) (Clostridium thermocellum).